The chain runs to 350 residues: Protein RecA (350 aa).

Residue 67-74 (GPESSGKT) participates in ATP binding.

The protein belongs to the RecA family.

It is found in the cytoplasm. Can catalyze the hydrolysis of ATP in the presence of single-stranded DNA, the ATP-dependent uptake of single-stranded DNA by duplex DNA, and the ATP-dependent hybridization of homologous single-stranded DNAs. It interacts with LexA causing its activation and leading to its autocatalytic cleavage. The polypeptide is Protein RecA (Chlamydia felis (strain Fe/C-56) (Chlamydophila felis)).